Reading from the N-terminus, the 182-residue chain is Translation initiation factor IF-3 (182 aa).

It belongs to the IF-3 family. As to quaternary structure, monomer.

It localises to the cytoplasm. IF-3 binds to the 30S ribosomal subunit and shifts the equilibrium between 70S ribosomes and their 50S and 30S subunits in favor of the free subunits, thus enhancing the availability of 30S subunits on which protein synthesis initiation begins. This chain is Translation initiation factor IF-3, found in Endomicrobium trichonymphae.